A 198-amino-acid polypeptide reads, in one-letter code: MDDASEQIAGVDEVGRGALFGPVVAATVILSDGAIEQLVAQGMTDSKKLSPQRRMILMNQIREVATGFRVGMASVYEIDRLNILQASLLAMRRAVLGLPSTPQLCLVDGNQRIPNLPVPQRTVVKGDQSEPEIAAASILAKVWRDQLIVRLDQRYPGYDLASNKGYGSAKHRQALRELGPTRQHRLSFAPCQASLLPD.

One can recognise an RNase H type-2 domain in the interval 6-198 (EQIAGVDEVG…APCQASLLPD (193 aa)). A divalent metal cation contacts are provided by Asp12, Glu13, and Asp108.

The protein belongs to the RNase HII family. It depends on Mn(2+) as a cofactor. Mg(2+) is required as a cofactor.

The protein resides in the cytoplasm. The enzyme catalyses Endonucleolytic cleavage to 5'-phosphomonoester.. In terms of biological role, endonuclease that specifically degrades the RNA of RNA-DNA hybrids. The chain is Ribonuclease HII from Acaryochloris marina (strain MBIC 11017).